A 45-amino-acid chain; its full sequence is Large ribosomal subunit protein bL34 (45 aa).

It belongs to the bacterial ribosomal protein bL34 family.

This is Large ribosomal subunit protein bL34 from Kocuria rhizophila (strain ATCC 9341 / DSM 348 / NBRC 103217 / DC2201).